The chain runs to 211 residues: Methylthioribulose-1-phosphate dehydratase (211 aa).

2 residues coordinate Zn(2+): histidine 97 and histidine 99.

This sequence belongs to the aldolase class II family. MtnB subfamily. Homotetramer. Zn(2+) is required as a cofactor.

It carries out the reaction 5-(methylsulfanyl)-D-ribulose 1-phosphate = 5-methylsulfanyl-2,3-dioxopentyl phosphate + H2O. Its pathway is amino-acid biosynthesis; L-methionine biosynthesis via salvage pathway; L-methionine from S-methyl-5-thio-alpha-D-ribose 1-phosphate: step 2/6. Functionally, catalyzes the dehydration of methylthioribulose-1-phosphate (MTRu-1-P) into 2,3-diketo-5-methylthiopentyl-1-phosphate (DK-MTP-1-P). The polypeptide is Methylthioribulose-1-phosphate dehydratase (Geobacillus thermodenitrificans (strain NG80-2)).